We begin with the raw amino-acid sequence, 519 residues long: Maturase K (519 aa).

This sequence belongs to the intron maturase 2 family. MatK subfamily.

It is found in the plastid. The protein localises to the chloroplast. In terms of biological role, usually encoded in the trnK tRNA gene intron. Probably assists in splicing its own and other chloroplast group II introns. The protein is Maturase K of Keteleeria davidiana (David's keteleeria).